Reading from the N-terminus, the 176-residue chain is Large ribosomal subunit protein eL20 (176 aa).

Lysine 11 participates in a covalent cross-link: Glycyl lysine isopeptide (Lys-Gly) (interchain with G-Cter in SUMO2). Tyrosine 63 carries the post-translational modification Phosphotyrosine. Serine 71 is modified (phosphoserine). N6-succinyllysine is present on lysine 76. Serine 123 is subject to Phosphoserine. Residues lysine 128 and lysine 170 each participate in a glycyl lysine isopeptide (Lys-Gly) (interchain with G-Cter in SUMO2) cross-link.

This sequence belongs to the eukaryotic ribosomal protein eL20 family. In terms of assembly, component of the large ribosomal subunit. Binds IPO9 with high affinity.

The protein localises to the cytoplasm. Its function is as follows. Component of the large ribosomal subunit. The ribosome is a large ribonucleoprotein complex responsible for the synthesis of proteins in the cell. The polypeptide is Large ribosomal subunit protein eL20 (Rpl18a) (Mus musculus (Mouse)).